Reading from the N-terminus, the 84-residue chain is MKKQNLVEMEGTITESLPNAMFRVCLDNGCYVLAHISGKIRRNYIRILIGDRVKVELSPYDLSKGRITYRLRIKSINDSNDLIK.

An S1-like domain is found at 1-72; the sequence is MKKQNLVEME…SKGRITYRLR (72 aa).

This sequence belongs to the IF-1 family. Component of the 30S ribosomal translation pre-initiation complex which assembles on the 30S ribosome in the order IF-2 and IF-3, IF-1 and N-formylmethionyl-tRNA(fMet); mRNA recruitment can occur at any time during PIC assembly.

Its subcellular location is the plastid. The protein resides in the chloroplast. Functionally, one of the essential components for the initiation of protein synthesis. Stabilizes the binding of IF-2 and IF-3 on the 30S subunit to which N-formylmethionyl-tRNA(fMet) subsequently binds. Helps modulate mRNA selection, yielding the 30S pre-initiation complex (PIC). Upon addition of the 50S ribosomal subunit IF-1, IF-2 and IF-3 are released leaving the mature 70S translation initiation complex. In Spirogyra maxima (Green alga), this protein is Translation initiation factor IF-1, chloroplastic.